Consider the following 201-residue polypeptide: Chromophore lyase CpcT/CpeT (201 aa).

Belongs to the CpcT/CpeT biliprotein lyase family.

It localises to the plastid. It is found in the organellar chromatophore. In terms of biological role, covalently attaches a chromophore to Cys residue(s) of phycobiliproteins. The sequence is that of Chromophore lyase CpcT/CpeT from Paulinella chromatophora.